A 259-amino-acid polypeptide reads, in one-letter code: Deoxyribose-phosphate aldolase (259 aa).

The Proton donor/acceptor role is filled by Asp-102. Lys-167 functions as the Schiff-base intermediate with acetaldehyde in the catalytic mechanism. Lys-201 acts as the Proton donor/acceptor in catalysis.

Belongs to the DeoC/FbaB aldolase family. DeoC type 2 subfamily.

It localises to the cytoplasm. The enzyme catalyses 2-deoxy-D-ribose 5-phosphate = D-glyceraldehyde 3-phosphate + acetaldehyde. The protein operates within carbohydrate degradation; 2-deoxy-D-ribose 1-phosphate degradation; D-glyceraldehyde 3-phosphate and acetaldehyde from 2-deoxy-alpha-D-ribose 1-phosphate: step 2/2. Functionally, catalyzes a reversible aldol reaction between acetaldehyde and D-glyceraldehyde 3-phosphate to generate 2-deoxy-D-ribose 5-phosphate. This is Deoxyribose-phosphate aldolase from Enterobacter sp. (strain 638).